The chain runs to 315 residues: tRNA uridine(34) hydroxylase (315 aa).

The 102-residue stretch at 122-223 folds into the Rhodanese domain; it reads SDPDVLVIDT…YLEQIPQPES (102 aa). C183 serves as the catalytic Cysteine persulfide intermediate.

This sequence belongs to the TrhO family.

It carries out the reaction uridine(34) in tRNA + AH2 + O2 = 5-hydroxyuridine(34) in tRNA + A + H2O. Catalyzes oxygen-dependent 5-hydroxyuridine (ho5U) modification at position 34 in tRNAs. This chain is tRNA uridine(34) hydroxylase, found in Caulobacter vibrioides (strain ATCC 19089 / CIP 103742 / CB 15) (Caulobacter crescentus).